Reading from the N-terminus, the 403-residue chain is Ribosomal RNA large subunit methyltransferase I (403 aa).

The 80-residue stretch at Y9–R88 folds into the PUA domain.

This sequence belongs to the methyltransferase superfamily. RlmI family.

The protein localises to the cytoplasm. The enzyme catalyses cytidine(1962) in 23S rRNA + S-adenosyl-L-methionine = 5-methylcytidine(1962) in 23S rRNA + S-adenosyl-L-homocysteine + H(+). Functionally, specifically methylates the cytosine at position 1962 (m5C1962) of 23S rRNA. The polypeptide is Ribosomal RNA large subunit methyltransferase I (Salmonella choleraesuis (strain SC-B67)).